A 297-amino-acid chain; its full sequence is Averufin oxidase stcO (297 aa).

A helical membrane pass occupies residues 277–297; it reads VVVLGVCILLLLGGLLYSIKA.

Belongs to the avfA family.

The protein localises to the membrane. It participates in mycotoxin biosynthesis; sterigmatocystin biosynthesis. Its function is as follows. Averufin oxidase; part of the gene cluster that mediates the biosynthesis of sterigmatocystin (ST), a polyketide-derived furanocoumarin which is part of the most toxic and carcinogenic compounds among the known mycotoxins. The first step in the biosynthesis of sterigmatocystin is the production of hexanoate by the fatty acid synthase (FAS) units stcJ and stcK. The polyketide backbone is assembled by the non-reducing polyketide synthase stcA by condensation of the starter hexanoyl-CoA and 7 malonyl-CoA extender units followed by cyclization and release of norsolorinic acid. Norsolorinic acid is the first stable intermediate in the biosynthesis of sterigmatocystin and is converted into averantin (AVN) by the ketoreductase stcE which reduces the hexanoate ketone to an alcohol. Averantin is then oxidized into 5'-hydroxyaverantin (HAVN) by the cytochrome P450 monooxygenase stcF. 5'-hydroxyaverantin is further converted to 5'-oxyaverantin (OAVN) by the 5'-hydroxyaverantin dehydrogenase stcG. The next step is the conversion of OAVN into averufin (AVF) which is catalyzed by a yet to be identified enzyme. The cytochrome P450 monooxygenase stcB and the flavin-binding monooxygenase stcW are both required for the conversion of averufin to 1-hydroxyversicolorone. The esterase stcI probably catalyzes the formation of versiconal hemiacetal acetate from 1-hydroxyversicolorone. The oxydoreductase stcN then probably catalyzes the biosynthetic step from versiconal to versicolorin B (VERB). The next step is performed by the versicolorin B desaturase stcL to produce versicolorin A (VERA). The ketoreductase stcU and the cytochrome P450 monooxygenase stcS are involved in the conversion of versicolorin A to demethylsterigmatocystin. The Baeyer-Villiger oxidas stcQ and the reductase stcR might be involved in the biosynthetic step from versicolorin A to demethylsterigmatocystin. The final step in the biosynthesis of sterigmatocystin is the methylation of demethylsterigmatocystin catalyzed by the methyltransferase stcP. This chain is Averufin oxidase stcO, found in Emericella nidulans (strain FGSC A4 / ATCC 38163 / CBS 112.46 / NRRL 194 / M139) (Aspergillus nidulans).